A 383-amino-acid polypeptide reads, in one-letter code: UPF0425 pyridoxal phosphate-dependent protein Msp_0916 (383 aa).

Lys207 carries the post-translational modification N6-(pyridoxal phosphate)lysine.

This sequence belongs to the UPF0425 family. Requires pyridoxal 5'-phosphate as cofactor.

The protein is UPF0425 pyridoxal phosphate-dependent protein Msp_0916 of Methanosphaera stadtmanae (strain ATCC 43021 / DSM 3091 / JCM 11832 / MCB-3).